Reading from the N-terminus, the 261-residue chain is MTHQTHAYHMVNPSPWPLTGALSALLMTSGLAMWFHFNSTLLLAMGLLTNILTMYQWWRDIIRESTFQGHHTSIVQKGLRYGMILFIISEVFFFSGFFWAFYHSSLAPTPELGGCWPPTGIHPLNPLEVPLLNTSVLLASGVSITWAHHSLMEGNRKNMLQGLFITISLGVYFTLLQASEYYEASFTISDGVYGSTFFVATGFHGLHVIIGSTFLIVCFLRQLKFHFTSSHHFGFEAAAWYWHFVDVVWLFLYVSIYWWGS.

The Mitochondrial matrix portion of the chain corresponds to 1–15 (MTHQTHAYHMVNPSP). Residues 16 to 34 (WPLTGALSALLMTSGLAMW) traverse the membrane as a helical segment. At 35–40 (FHFNST) the chain is on the mitochondrial intermembrane side. The chain crosses the membrane as a helical span at residues 41-66 (LLLAMGLLTNILTMYQWWRDIIREST). Topologically, residues 67–72 (FQGHHT) are mitochondrial matrix. A helical transmembrane segment spans residues 73 to 105 (SIVQKGLRYGMILFIISEVFFFSGFFWAFYHSS). Over 106-128 (LAPTPELGGCWPPTGIHPLNPLE) the chain is Mitochondrial intermembrane. The helical transmembrane segment at 129–152 (VPLLNTSVLLASGVSITWAHHSLM) threads the bilayer. The Mitochondrial matrix portion of the chain corresponds to 153-155 (EGN). Residues 156-183 (RKNMLQGLFITISLGVYFTLLQASEYYE) traverse the membrane as a helical segment. Over 184 to 190 (ASFTISD) the chain is Mitochondrial intermembrane. The helical transmembrane segment at 191–223 (GVYGSTFFVATGFHGLHVIIGSTFLIVCFLRQL) threads the bilayer. Over 224 to 232 (KFHFTSSHH) the chain is Mitochondrial matrix. The chain crosses the membrane as a helical span at residues 233–256 (FGFEAAAWYWHFVDVVWLFLYVSI). Residues 257 to 261 (YWWGS) lie on the Mitochondrial intermembrane side of the membrane.

It belongs to the cytochrome c oxidase subunit 3 family. Component of the cytochrome c oxidase (complex IV, CIV), a multisubunit enzyme composed of 14 subunits. The complex is composed of a catalytic core of 3 subunits MT-CO1, MT-CO2 and MT-CO3, encoded in the mitochondrial DNA, and 11 supernumerary subunits COX4I, COX5A, COX5B, COX6A, COX6B, COX6C, COX7A, COX7B, COX7C, COX8 and NDUFA4, which are encoded in the nuclear genome. The complex exists as a monomer or a dimer and forms supercomplexes (SCs) in the inner mitochondrial membrane with NADH-ubiquinone oxidoreductase (complex I, CI) and ubiquinol-cytochrome c oxidoreductase (cytochrome b-c1 complex, complex III, CIII), resulting in different assemblies (supercomplex SCI(1)III(2)IV(1) and megacomplex MCI(2)III(2)IV(2)).

The protein resides in the mitochondrion inner membrane. It catalyses the reaction 4 Fe(II)-[cytochrome c] + O2 + 8 H(+)(in) = 4 Fe(III)-[cytochrome c] + 2 H2O + 4 H(+)(out). Its function is as follows. Component of the cytochrome c oxidase, the last enzyme in the mitochondrial electron transport chain which drives oxidative phosphorylation. The respiratory chain contains 3 multisubunit complexes succinate dehydrogenase (complex II, CII), ubiquinol-cytochrome c oxidoreductase (cytochrome b-c1 complex, complex III, CIII) and cytochrome c oxidase (complex IV, CIV), that cooperate to transfer electrons derived from NADH and succinate to molecular oxygen, creating an electrochemical gradient over the inner membrane that drives transmembrane transport and the ATP synthase. Cytochrome c oxidase is the component of the respiratory chain that catalyzes the reduction of oxygen to water. Electrons originating from reduced cytochrome c in the intermembrane space (IMS) are transferred via the dinuclear copper A center (CU(A)) of subunit 2 and heme A of subunit 1 to the active site in subunit 1, a binuclear center (BNC) formed by heme A3 and copper B (CU(B)). The BNC reduces molecular oxygen to 2 water molecules using 4 electrons from cytochrome c in the IMS and 4 protons from the mitochondrial matrix. The polypeptide is Cytochrome c oxidase subunit 3 (MT-CO3) (Equus caballus (Horse)).